A 93-amino-acid chain; its full sequence is Small ribosomal subunit protein uS19 (93 aa).

The protein belongs to the universal ribosomal protein uS19 family.

In terms of biological role, protein S19 forms a complex with S13 that binds strongly to the 16S ribosomal RNA. The protein is Small ribosomal subunit protein uS19 of Helicobacter pylori (strain G27).